The primary structure comprises 268 residues: Transcription initiation factor TFIID subunit 14b (268 aa).

The span at 1–20 (MTNSSSSKKQAQDQPETSEP) shows a compositional bias: polar residues. Residues 1–36 (MTNSSSSKKQAQDQPETSEPTLKSLKTKMTKSDEKQ) are disordered. The YEATS domain maps to 38 to 182 (KLKDIEISVP…ESFLARVQNH (145 aa)). The stretch at 229–263 (DELLQLAAARQQVQAHIAKLRRQISLLEGQNQTVK) forms a coiled coil.

This sequence belongs to the YAF9 family. In terms of assembly, component of the TFIID complex. TFIID is composed of TATA binding protein (TBP) and a number of TBP-associated factors (TAFs) whose MWs range from 14-217 kDa. Interacts with TAF1, TAF4B and TAF12B. Component of the SWR1 chromatin-remodeling complex. Interacts with FLX, a component of the transcription activator complex FRI-C. Interacts with SWC4, and with EAF1A and EAF1B (via HSA domain). Expressed in roots, leaves, inflorescence and flowering tissues.

It is found in the cytoplasm. It localises to the nucleus. Negative regulator of flowering controlling the H4K5 acetylation levels in the FLC and FT chromatin. Positively regulates FLC expression. Component of the transcription factor IID (TFIID) complex that is essential for mediating regulation of RNA polymerase transcription. Component of the SWR1 complex which mediates the ATP-dependent exchange of histone H2A for the H2A variant HZT1 leading to transcriptional regulation of selected genes by chromatin remodeling. Component of a NuA4 histone acetyltransferase complex which is involved in transcriptional activation of selected genes principally by acetylation of nucleosomal histones H4 and H2A. The chain is Transcription initiation factor TFIID subunit 14b from Arabidopsis thaliana (Mouse-ear cress).